The chain runs to 268 residues: Phosphatidylglycerol--prolipoprotein diacylglyceryl transferase (268 aa).

7 helical membrane-spanning segments follow: residues 10–30 (VALAIGPLKIHWYGLMYLIGI), 56–76 (LVFWLSMGVIVGGRLGYVLFY), 92–112 (WKGGMSFHGGFIGVMLAALWF), 120–140 (FFELMDFVAPLVPIGLGAGRI), 174–194 (PSQLYQFALEGVALFVILWLF), 202–222 (MAVSGMFALFYGIFRFIVEFV), and 236–256 (WLTMGQILCVPMILAGLGLIW). Residue Arg-139 coordinates a 1,2-diacyl-sn-glycero-3-phospho-(1'-sn-glycerol).

It belongs to the Lgt family.

Its subcellular location is the cell inner membrane. It catalyses the reaction L-cysteinyl-[prolipoprotein] + a 1,2-diacyl-sn-glycero-3-phospho-(1'-sn-glycerol) = an S-1,2-diacyl-sn-glyceryl-L-cysteinyl-[prolipoprotein] + sn-glycerol 1-phosphate + H(+). Its pathway is protein modification; lipoprotein biosynthesis (diacylglyceryl transfer). In terms of biological role, catalyzes the transfer of the diacylglyceryl group from phosphatidylglycerol to the sulfhydryl group of the N-terminal cysteine of a prolipoprotein, the first step in the formation of mature lipoproteins. The sequence is that of Phosphatidylglycerol--prolipoprotein diacylglyceryl transferase from Pseudomonas putida (strain ATCC 700007 / DSM 6899 / JCM 31910 / BCRC 17059 / LMG 24140 / F1).